The following is a 1196-amino-acid chain: DNA-directed RNA polymerase subunit beta (1196 aa).

Belongs to the RNA polymerase beta chain family. As to quaternary structure, the RNAP catalytic core consists of 2 alpha, 1 beta, 1 beta' and 1 omega subunit. When a sigma factor is associated with the core the holoenzyme is formed, which can initiate transcription.

The enzyme catalyses RNA(n) + a ribonucleoside 5'-triphosphate = RNA(n+1) + diphosphate. Its function is as follows. DNA-dependent RNA polymerase catalyzes the transcription of DNA into RNA using the four ribonucleoside triphosphates as substrates. This is DNA-directed RNA polymerase subunit beta from Lactococcus lactis subsp. cremoris (strain MG1363).